Here is a 327-residue protein sequence, read N- to C-terminus: Acetyl-coenzyme A carboxylase carboxyl transferase subunit alpha (327 aa).

Residues 46-299 (LEARAIQLRR…RQVLLRHLKD (254 aa)) form the CoA carboxyltransferase C-terminal domain.

Belongs to the AccA family. As to quaternary structure, acetyl-CoA carboxylase is a heterohexamer composed of biotin carboxyl carrier protein (AccB), biotin carboxylase (AccC) and two subunits each of ACCase subunit alpha (AccA) and ACCase subunit beta (AccD).

The protein resides in the cytoplasm. The catalysed reaction is N(6)-carboxybiotinyl-L-lysyl-[protein] + acetyl-CoA = N(6)-biotinyl-L-lysyl-[protein] + malonyl-CoA. Its pathway is lipid metabolism; malonyl-CoA biosynthesis; malonyl-CoA from acetyl-CoA: step 1/1. Component of the acetyl coenzyme A carboxylase (ACC) complex. First, biotin carboxylase catalyzes the carboxylation of biotin on its carrier protein (BCCP) and then the CO(2) group is transferred by the carboxyltransferase to acetyl-CoA to form malonyl-CoA. This Synechococcus elongatus (strain ATCC 33912 / PCC 7942 / FACHB-805) (Anacystis nidulans R2) protein is Acetyl-coenzyme A carboxylase carboxyl transferase subunit alpha.